A 354-amino-acid polypeptide reads, in one-letter code: 3-isopropylmalate dehydrogenase (354 aa).

Residue 76 to 87 coordinates NAD(+); the sequence is GPRWDSAKERPE. Arginine 94, arginine 104, arginine 130, and aspartate 215 together coordinate substrate. Aspartate 215, aspartate 239, and aspartate 243 together coordinate Mg(2+). 273-285 is a binding site for NAD(+); that stretch reads GSAPDIAGKNKAN.

The protein belongs to the isocitrate and isopropylmalate dehydrogenases family. LeuB type 1 subfamily. In terms of assembly, homodimer. Mg(2+) serves as cofactor. It depends on Mn(2+) as a cofactor.

It is found in the cytoplasm. It catalyses the reaction (2R,3S)-3-isopropylmalate + NAD(+) = 4-methyl-2-oxopentanoate + CO2 + NADH. It functions in the pathway amino-acid biosynthesis; L-leucine biosynthesis; L-leucine from 3-methyl-2-oxobutanoate: step 3/4. Its function is as follows. Catalyzes the oxidation of 3-carboxy-2-hydroxy-4-methylpentanoate (3-isopropylmalate) to 3-carboxy-4-methyl-2-oxopentanoate. The product decarboxylates to 4-methyl-2 oxopentanoate. The polypeptide is 3-isopropylmalate dehydrogenase (Bacillus cereus (strain ATCC 10987 / NRS 248)).